Consider the following 556-residue polypeptide: Potassium-transporting ATPase potassium-binding subunit (556 aa).

10 consecutive transmembrane segments (helical) span residues 5 to 25 (LAGI…HVPL), 65 to 85 (SVLA…LVQG), 133 to 153 (GLAV…IALV), 176 to 196 (IRIL…GGAI), 249 to 269 (PTTW…FSLP), 283 to 303 (YAIV…TLFF), 377 to 397 (AGLY…GLMV), 415 to 435 (LAAT…AVAM), 483 to 503 (ALGL…LALA), and 526 to 546 (FVGM…LPML).

The protein belongs to the KdpA family. In terms of assembly, the system is composed of three essential subunits: KdpA, KdpB and KdpC.

It localises to the cell membrane. Its function is as follows. Part of the high-affinity ATP-driven potassium transport (or Kdp) system, which catalyzes the hydrolysis of ATP coupled with the electrogenic transport of potassium into the cytoplasm. This subunit binds the extracellular potassium ions and delivers the ions to the membrane domain of KdpB through an intramembrane tunnel. This Mycolicibacterium vanbaalenii (strain DSM 7251 / JCM 13017 / BCRC 16820 / KCTC 9966 / NRRL B-24157 / PYR-1) (Mycobacterium vanbaalenii) protein is Potassium-transporting ATPase potassium-binding subunit.